Here is a 157-residue protein sequence, read N- to C-terminus: NAD(P)H-quinone oxidoreductase subunit N (157 aa).

The protein belongs to the complex I NdhN subunit family. NDH-1 can be composed of about 15 different subunits; different subcomplexes with different compositions have been identified which probably have different functions.

The protein resides in the cellular thylakoid membrane. It carries out the reaction a plastoquinone + NADH + (n+1) H(+)(in) = a plastoquinol + NAD(+) + n H(+)(out). The enzyme catalyses a plastoquinone + NADPH + (n+1) H(+)(in) = a plastoquinol + NADP(+) + n H(+)(out). NDH-1 shuttles electrons from an unknown electron donor, via FMN and iron-sulfur (Fe-S) centers, to quinones in the respiratory and/or the photosynthetic chain. The immediate electron acceptor for the enzyme in this species is believed to be plastoquinone. Couples the redox reaction to proton translocation, and thus conserves the redox energy in a proton gradient. Cyanobacterial NDH-1 also plays a role in inorganic carbon-concentration. In Synechococcus sp. (strain CC9902), this protein is NAD(P)H-quinone oxidoreductase subunit N.